The sequence spans 139 residues: Peptide methionine sulfoxide reductase MsrB (139 aa).

One can recognise a MsrB domain in the interval 9–131 (TPSDNTELTE…NSASLSFIDD (123 aa)). C48, C51, C97, and C100 together coordinate Zn(2+). The active-site Nucleophile is C120.

Belongs to the MsrB Met sulfoxide reductase family. Zn(2+) is required as a cofactor.

It catalyses the reaction L-methionyl-[protein] + [thioredoxin]-disulfide + H2O = L-methionyl-(R)-S-oxide-[protein] + [thioredoxin]-dithiol. This chain is Peptide methionine sulfoxide reductase MsrB, found in Pectobacterium carotovorum subsp. carotovorum (strain PC1).